Consider the following 349-residue polypeptide: 5-deoxyribose 1-phosphate isomerase (349 aa).

Substrate contacts are provided by residues 49-51 (RGA), Arg-92, and Gln-199. The active-site Proton donor is Asp-240. A substrate-binding site is contributed by 250 to 251 (NK).

It belongs to the EIF-2B alpha/beta/delta subunits family. DrdI subfamily.

The catalysed reaction is 5-deoxy-alpha-D-ribose 1-phosphate = 5-deoxy-D-ribulose 1-phosphate. The protein operates within carbohydrate degradation. Catalyzes the isomerization of 5-deoxy-alpha-D-ribose 1-phosphate to 5-deoxy-D-ribulose 1-phosphate, as part of a 5-deoxyribose salvage pathway that recycles this toxic radical SAM enzyme by-product to mainstream metabolites. In Clostridium botulinum (strain Okra / Type B1), this protein is 5-deoxyribose 1-phosphate isomerase.